The primary structure comprises 389 residues: Phosphopentomutase (389 aa).

Residues D9, D282, H287, D323, H324, and H335 each contribute to the Mn(2+) site.

Belongs to the phosphopentomutase family. Requires Mn(2+) as cofactor.

It localises to the cytoplasm. It carries out the reaction 2-deoxy-alpha-D-ribose 1-phosphate = 2-deoxy-D-ribose 5-phosphate. It catalyses the reaction alpha-D-ribose 1-phosphate = D-ribose 5-phosphate. It functions in the pathway carbohydrate degradation; 2-deoxy-D-ribose 1-phosphate degradation; D-glyceraldehyde 3-phosphate and acetaldehyde from 2-deoxy-alpha-D-ribose 1-phosphate: step 1/2. In terms of biological role, isomerase that catalyzes the conversion of deoxy-ribose 1-phosphate (dRib-1-P) and ribose 1-phosphate (Rib-1-P) to deoxy-ribose 5-phosphate (dRib-5-P) and ribose 5-phosphate (Rib-5-P), respectively. This is Phosphopentomutase from Pseudothermotoga lettingae (strain ATCC BAA-301 / DSM 14385 / NBRC 107922 / TMO) (Thermotoga lettingae).